A 317-amino-acid chain; its full sequence is L-lactate dehydrogenase 1 (317 aa).

NAD(+) is bound by residues valine 17, aspartate 38, lysine 43, tyrosine 69, and glycine 83–alanine 84. Residues glutamine 86 and arginine 92 each contribute to the substrate site. Residues serine 105, alanine 122–asparagine 124, and serine 147 contribute to the NAD(+) site. Residue asparagine 124–aspartate 127 coordinates substrate. Residue aspartate 152–arginine 155 participates in substrate binding. Histidine 179 acts as the Proton acceptor in catalysis. Position 223 is a phosphotyrosine (tyrosine 223). Residue threonine 232 participates in substrate binding.

The protein belongs to the LDH/MDH superfamily. LDH family. In terms of assembly, homotetramer.

Its subcellular location is the cytoplasm. It carries out the reaction (S)-lactate + NAD(+) = pyruvate + NADH + H(+). Its pathway is fermentation; pyruvate fermentation to lactate; (S)-lactate from pyruvate: step 1/1. In terms of biological role, catalyzes the conversion of lactate to pyruvate (Potential). Appears to be the primary factor that allows S.aureus growth during nitrosative stress in both aerobically and anaerobically cultured cells. This is L-lactate dehydrogenase 1 from Staphylococcus aureus (strain bovine RF122 / ET3-1).